The chain runs to 399 residues: Phosphoglycerate kinase (399 aa).

Substrate-binding positions include 20 to 22 (DFN), arginine 35, 58 to 61 (HLGR), arginine 117, and arginine 154. Residues lysine 204, glycine 295, glutamate 326, and 355-358 (GGDS) each bind ATP.

Belongs to the phosphoglycerate kinase family. In terms of assembly, monomer.

The protein localises to the cytoplasm. It catalyses the reaction (2R)-3-phosphoglycerate + ATP = (2R)-3-phospho-glyceroyl phosphate + ADP. It participates in carbohydrate degradation; glycolysis; pyruvate from D-glyceraldehyde 3-phosphate: step 2/5. The sequence is that of Phosphoglycerate kinase from Beutenbergia cavernae (strain ATCC BAA-8 / DSM 12333 / CCUG 43141 / JCM 11478 / NBRC 16432 / NCIMB 13614 / HKI 0122).